The primary structure comprises 395 residues: RNA pseudouridine synthase 7 (395 aa).

The tract at residues 1-21 is disordered; that stretch reads MKRKQQEDDNDDGVEKAVSPV. Residues 74-136 form the S4 RNA-binding domain; the sequence is KTIVDLFADE…HEPPVMIDDV (63 aa). Asp187 is a catalytic residue. Positions 244 to 255 are enriched in polar residues; sequence EGRSTAEDANSS. The tract at residues 244–263 is disordered; the sequence is EGRSTAEDANSSGDDKKVKG.

Belongs to the pseudouridine synthase RluA family.

It catalyses the reaction a uridine in RNA = a pseudouridine in RNA. The chain is RNA pseudouridine synthase 7 from Arabidopsis thaliana (Mouse-ear cress).